The primary structure comprises 617 residues: Cytoplasmic polyadenylation element-binding protein 1 (617 aa).

The tract at residues 1–38 is disordered; it reads MQSQLKACGDAPAPSCSLHHRRTISKKPSNGGNSGGGG. RRM domains follow at residues 273–377 and 394–465; these read RKVF…AWRL and RTVF…HADT. Disordered regions lie at residues 534-568 and 592-617; these read DQTRILPRPPHHSTSHYHHRSTPSHHHNHTHQNVT and NQNNNSANSTPPQMKQFSAIPTAIGY. The span at 542 to 563 shows a compositional bias: basic residues; that stretch reads PPHHSTSHYHHRSTPSHHHNHT.

Interacts with fbf-1.

Functionally, cytoplasmic polyadenylation element binding protein that binds to and regulates the translation of specific mRNAs. Essential for progression through meiosis. Involved in spermatogenesis. The sequence is that of Cytoplasmic polyadenylation element-binding protein 1 (cpb-1) from Caenorhabditis japonica.